Consider the following 232-residue polypeptide: Large ribosomal subunit protein uL1 (232 aa).

The protein belongs to the universal ribosomal protein uL1 family. As to quaternary structure, part of the 50S ribosomal subunit.

Binds directly to 23S rRNA. The L1 stalk is quite mobile in the ribosome, and is involved in E site tRNA release. Its function is as follows. Protein L1 is also a translational repressor protein, it controls the translation of the L11 operon by binding to its mRNA. This is Large ribosomal subunit protein uL1 from Variovorax paradoxus (strain S110).